The following is a 568-amino-acid chain: Phosphoprotein (568 aa).

Disordered stretches follow at residues 1–22 (MDQDAFILKEDSEVERKAPGGR) and 40–320 (PTDI…GIGE). Positions 7 to 20 (ILKEDSEVERKAPG) are enriched in basic and acidic residues. Positions 33–41 (DAVLSSEPT) are N0 binding. Over residues 50–60 (LHNTINTSQGP) the composition is skewed to polar residues. At Ser-68 the chain carries Phosphoserine; by host. Positions 83–101 (RSGEESRVSGRTSKPEAEA) are enriched in basic and acidic residues. Ser-125 bears the Phosphoserine; by host mark. Residues 150-168 (GIEDENREMAAHPDKRGED) show a composition bias toward basic and acidic residues. The span at 191–206 (ASNNGRSMEPGSSHSA) shows a compositional bias: polar residues. Phosphoserine; by host is present on residues Ser-192, Ser-249, and Ser-257. Positions 344–411 (FESSRDASYV…SFRDIYKRFS (68 aa)) are multimerization. The stretch at 364–429 (YAEMTFNVCG…LLMSNLSTLH (66 aa)) forms a coiled coil. The l protein binding stretch occupies residues 412–445 (EYQKEQNSLLMSNLSTLHIITDRGGKTDNTDSLT). A phosphoserine; by host mark is found at Ser-447 and Ser-449. Residues 479–568 (DLIREDEFRD…VEEDIESLTN (90 aa)) form an interaction with the nucleocapsid (N-RNA) region.

Belongs to the respirovirus P protein family. Homotetramer. Interacts (via multimerization domain) with polymerase L; this interaction forms the polymerase complex. Interacts (via N-terminus) with N0; this interaction allows P to chaperon N0 before encapsidation and form the N-P complex. Interacts (via C-terminus) with N-RNA template; this interaction positions the polymerase on the template. In terms of processing, phosphorylated by PKC/PRKCZ, and other unknown kinases. Phosphorylation is necessary for viral transcription and replication. The N-terminus contains the majority of phosphorylated sites. Ser-249 is the major site of phosphorylation, but is not necessary for most functions.

Its subcellular location is the host cytoplasm. Functionally, essential cofactor of the RNA polymerase L that plays a central role in the transcription and replication by forming the polymerase complex with RNA polymerase L and recruiting L to the genomic N-RNA template for RNA synthesis. Also plays a central role in the encapsidation of nascent RNA chains by forming the encapsidation complex with the nucleocapsid protein N (N-P complex). Acts as a chaperone for newly synthesized free N protein, so-called N0, allowing encapsidation of nascent RNA chains during replication. The nucleoprotein protein N prevents excessive phosphorylation of P, which leads to down-regulation of viral transcription/ replication. Participates, together with N, in the formation of viral factories (viroplasms), which are large inclusions in the host cytoplasm where replication takes place. Recruits host PI4KB and remodel the host endoplasmic reticulum membrane to form viral replication factories. The protein is Phosphoprotein (P/V/C) of Sendai virus (strain 6/94) (SeV).